The sequence spans 359 residues: 4-hydroxy-3-methylbut-2-en-1-yl diphosphate synthase (flavodoxin) (359 aa).

[4Fe-4S] cluster contacts are provided by Cys265, Cys268, Cys300, and Glu307.

Belongs to the IspG family. The cofactor is [4Fe-4S] cluster.

The catalysed reaction is (2E)-4-hydroxy-3-methylbut-2-enyl diphosphate + oxidized [flavodoxin] + H2O + 2 H(+) = 2-C-methyl-D-erythritol 2,4-cyclic diphosphate + reduced [flavodoxin]. It participates in isoprenoid biosynthesis; isopentenyl diphosphate biosynthesis via DXP pathway; isopentenyl diphosphate from 1-deoxy-D-xylulose 5-phosphate: step 5/6. Functionally, converts 2C-methyl-D-erythritol 2,4-cyclodiphosphate (ME-2,4cPP) into 1-hydroxy-2-methyl-2-(E)-butenyl 4-diphosphate. The sequence is that of 4-hydroxy-3-methylbut-2-en-1-yl diphosphate synthase (flavodoxin) from Lawsonia intracellularis (strain PHE/MN1-00).